Here is a 463-residue protein sequence, read N- to C-terminus: Ribosomal protein uS12 methylthiotransferase RimO (463 aa).

One can recognise an MTTase N-terminal domain in the interval 15-130 (PKVGMVSLGC…VMQAVHSHLP (116 aa)). Positions 24, 60, 89, 161, 165, and 168 each coordinate [4Fe-4S] cluster. The 246-residue stretch at 147–392 (LTPRHYAYLK…MEVAEEVSAA (246 aa)) folds into the Radical SAM core domain. The region spanning 395-463 (ARKIGKTLKV…ADGHDLWGEV (69 aa)) is the TRAM domain.

Belongs to the methylthiotransferase family. RimO subfamily. [4Fe-4S] cluster serves as cofactor.

The protein localises to the cytoplasm. The enzyme catalyses L-aspartate(89)-[ribosomal protein uS12]-hydrogen + (sulfur carrier)-SH + AH2 + 2 S-adenosyl-L-methionine = 3-methylsulfanyl-L-aspartate(89)-[ribosomal protein uS12]-hydrogen + (sulfur carrier)-H + 5'-deoxyadenosine + L-methionine + A + S-adenosyl-L-homocysteine + 2 H(+). Functionally, catalyzes the methylthiolation of an aspartic acid residue of ribosomal protein uS12. In Burkholderia mallei (strain NCTC 10229), this protein is Ribosomal protein uS12 methylthiotransferase RimO.